The chain runs to 1030 residues: Semaphorin-6A (1030 aa).

Residues 1 to 18 form the signal peptide; it reads MRSEALLLYFTLLHFAGA. The Extracellular portion of the chain corresponds to 19 to 649; the sequence is GFPEDSEPIS…KGHDQLVPVT (631 aa). The Sema domain maps to 24-512; it reads SEPISISHGN…FSTCVIKVPL (489 aa). N-linked (GlcNAc...) asparagine glycans are attached at residues asparagine 33, asparagine 49, and asparagine 65. Intrachain disulfides connect cysteine 107–cysteine 117, cysteine 135–cysteine 144, cysteine 258–cysteine 369, and cysteine 283–cysteine 328. Residue asparagine 282 is glycosylated (N-linked (GlcNAc...) asparagine). Residues asparagine 434 and asparagine 461 are each glycosylated (N-linked (GlcNAc...) asparagine). Intrachain disulfides connect cysteine 477–cysteine 506, cysteine 515–cysteine 533, cysteine 521–cysteine 568, and cysteine 525–cysteine 542. A helical transmembrane segment spans residues 650-670; that stretch reads LLAIAVILAFVMGAVFSGITV. At 671 to 1030 the chain is on the cytoplasmic side; sequence YCVCDHRRKD…TSMKPNDACT (360 aa). Residue serine 698 is modified to Phosphoserine. 3 disordered regions span residues 754 to 778, 860 to 897, and 912 to 1030; these read ALPTPESTPTLQQKRKPSRGSREWE, SSKSPNHGVNLVENLDSLPPKVPQREASLGPPGASLSQ, and YGVD…DACT. Residues 920–936 are compositionally biased toward polar residues; sequence YPTNSLTRSHQATTLKR. A compositionally biased stretch (low complexity) spans 937–952; that stretch reads NNTNSSNSSHLSRNQS. Position 952 is a phosphoserine (serine 952). Composition is skewed to polar residues over residues 970–997 and 1018–1030; these read QVHSSQPSGQAVTVSRQPSLNAYNSLTR and PLSTSMKPNDACT.

It belongs to the semaphorin family. In terms of assembly, active as a homodimer or oligomer. The SEMA6A homodimer interacts with a PLXNA2 homodimer, giving rise to a heterotetramer. Interacts with EVL. (Microbial infection) Interacts with P.sordellii toxin TcsL; semaphorins SEMA6A and SEMA6B constitute the major host receptors for TcsL in the vascular endothelium.

It localises to the cell membrane. Functionally, cell surface receptor for PLXNA2 that plays an important role in cell-cell signaling. Required for normal granule cell migration in the developing cerebellum. Promotes reorganization of the actin cytoskeleton and plays an important role in axon guidance in the developing central nervous system. Can act as repulsive axon guidance cue. Has repulsive action towards migrating granular neurons. May play a role in channeling sympathetic axons into the sympathetic chains and controlling the temporal sequence of sympathetic target innervation. (Microbial infection) Acts as a receptor for P.sordellii toxin TcsL in the in the vascular endothelium. The protein is Semaphorin-6A (SEMA6A) of Homo sapiens (Human).